The primary structure comprises 1055 residues: Bifunctional fucokinase/GDP-fucose pyrophosphorylase (1055 aa).

Residues 34–565 are GDP-fucose pyrophosphorylase; that stretch reads WDAIVLTAAS…SSQRVSLEEL (532 aa). The L-fucokinase stretch occupies residues 693–1055; that stretch reads GKSHSENHIS…VKVYNWSICI (363 aa). 826–836 contacts ATP; sequence PRGSGLGTSSI.

This sequence belongs to the GHMP kinase family. The cofactor is Mn(2+). Requires Mg(2+) as cofactor. In terms of tissue distribution, ubiquitous. Highest expression in flower buds.

It carries out the reaction L-fucose + ATP = beta-L-fucose 1-phosphate + ADP + H(+). It catalyses the reaction beta-L-fucose 1-phosphate + GTP + H(+) = GDP-beta-L-fucose + diphosphate. Functionally, bifunctional enzyme involved in the salvage pathway which converts free L-fucose to GDP-L-fucose. Catalyzes two successive reactions, the ATP-dependent phosphorylation of L-fucose to L-fucose 1-phosphate, and its guanylylation to GDP-L-fucose. The sugar-1-kinase activity has a strict substrate specificity for L-fucose and ATP. The pyrophosphorylase activity has a strict substrate specificity for L-fucose 1-phosphate and GTP. The chain is Bifunctional fucokinase/GDP-fucose pyrophosphorylase (FKGP) from Arabidopsis thaliana (Mouse-ear cress).